The sequence spans 150 residues: Large ribosomal subunit protein uL15 (150 aa).

The disordered stretch occupies residues 1 to 49 (MELHQLKSVSKSRNHKSKVVGRGHGSGLGKTSSRGQKGQKARKSGLTRL). The segment covering 10 to 21 (SKSRNHKSKVVG) has biased composition (basic residues).

This sequence belongs to the universal ribosomal protein uL15 family. In terms of assembly, part of the 50S ribosomal subunit.

Binds to the 23S rRNA. The protein is Large ribosomal subunit protein uL15 of Mycoplasma genitalium (strain ATCC 33530 / DSM 19775 / NCTC 10195 / G37) (Mycoplasmoides genitalium).